Reading from the N-terminus, the 171-residue chain is Methyl-coenzyme M reductase operon protein D (171 aa).

As to quaternary structure, MCR is composed of three subunits: alpha, beta, and gamma. The function of proteins C and D is not known.

This Methanosarcina barkeri (strain Fusaro / DSM 804) protein is Methyl-coenzyme M reductase operon protein D (mcrD).